The chain runs to 430 residues: Enolase (430 aa).

(2R)-2-phosphoglycerate is bound at residue glutamine 167. Glutamate 209 functions as the Proton donor in the catalytic mechanism. 3 residues coordinate Mg(2+): aspartate 245, glutamate 286, and aspartate 313. Residues lysine 338, arginine 367, serine 368, and lysine 389 each contribute to the (2R)-2-phosphoglycerate site. The active-site Proton acceptor is lysine 338.

The protein belongs to the enolase family. Mg(2+) is required as a cofactor.

The protein localises to the cytoplasm. Its subcellular location is the secreted. It localises to the cell surface. The catalysed reaction is (2R)-2-phosphoglycerate = phosphoenolpyruvate + H2O. It functions in the pathway carbohydrate degradation; glycolysis; pyruvate from D-glyceraldehyde 3-phosphate: step 4/5. In terms of biological role, catalyzes the reversible conversion of 2-phosphoglycerate (2-PG) into phosphoenolpyruvate (PEP). It is essential for the degradation of carbohydrates via glycolysis. The sequence is that of Enolase from Synechococcus sp. (strain WH7803).